Here is a 569-residue protein sequence, read N- to C-terminus: Thiol:disulfide interchange protein DsbD (569 aa).

The N-terminal stretch at 1–19 (MAQRILTLILLLCSTSAFA) is a signal peptide. Disulfide bonds link Cys-122–Cys-128 and Cys-187–Cys-309. 7 consecutive transmembrane segments (helical) span residues 168–188 (LPFS…TPCV), 213–233 (LLTF…GLVV), 248–268 (YVLI…FGLF), 301–321 (IAGL…LLYI), 328–348 (WLGG…LILI), 362–382 (WMEH…VFLL), and 391–411 (GLRL…ITSL). The Thioredoxin domain maps to 430–569 (LVSVRPLQDW…FSAHLRDRQP (140 aa)). Cys-484 and Cys-487 form a disulfide bridge.

Belongs to the thioredoxin family. DsbD subfamily.

The protein resides in the cell inner membrane. The enzyme catalyses [protein]-dithiol + NAD(+) = [protein]-disulfide + NADH + H(+). The catalysed reaction is [protein]-dithiol + NADP(+) = [protein]-disulfide + NADPH + H(+). Its function is as follows. Required to facilitate the formation of correct disulfide bonds in some periplasmic proteins and for the assembly of the periplasmic c-type cytochromes. Acts by transferring electrons from cytoplasmic thioredoxin to the periplasm. This transfer involves a cascade of disulfide bond formation and reduction steps. The sequence is that of Thiol:disulfide interchange protein DsbD from Citrobacter koseri (strain ATCC BAA-895 / CDC 4225-83 / SGSC4696).